The primary structure comprises 626 residues: Methanol dehydrogenase [cytochrome c] subunit 1 (626 aa).

Residues 1–27 (MSRFVTSVSALAMLALAPAALSSVAYA) form the signal peptide. Residues Cys-130 and Cys-131 are joined by a disulfide bond. Glu-204 and Asn-288 together coordinate Ca(2+). Residue Asp-330 is the Proton acceptor of the active site. An intrachain disulfide couples Cys-413 to Cys-442.

This sequence belongs to the bacterial PQQ dehydrogenase family. As to quaternary structure, heterotetramer composed of 2 alpha and 2 beta subunits. The cofactor is pyrroloquinoline quinone. Ca(2+) serves as cofactor.

It localises to the cell inner membrane. It carries out the reaction 2 Fe(III)-[cytochrome cL] + a primary alcohol = 2 Fe(II)-[cytochrome cL] + an aldehyde + 2 H(+). Its function is as follows. Catalyzes the oxidation of primary alcohols including methanol. This chain is Methanol dehydrogenase [cytochrome c] subunit 1 (moxF), found in Methylobacterium organophilum.